A 554-amino-acid chain; its full sequence is CTP synthase (554 aa).

Positions 1–265 are amidoligase domain; sequence MTPLIFVTGG…DEIVIDQFKL (265 aa). A CTP-binding site is contributed by S13. Residue S13 participates in UTP binding. ATP-binding positions include 14–19 and D71; that span reads SLGKGI. 2 residues coordinate Mg(2+): D71 and E139. Residues 146-148, 186-191, and K222 contribute to the CTP site; these read DIE and KTKPTQ. Residues 186 to 191 and K222 contribute to the UTP site; that span reads KTKPTQ. In terms of domain architecture, Glutamine amidotransferase type-1 spans 292 to 545; it reads TIAVVGKYVD…VKAARARKAG (254 aa). G353 is an L-glutamine binding site. C380 functions as the Nucleophile; for glutamine hydrolysis in the catalytic mechanism. Residues 381–384, E404, and R471 each bind L-glutamine; that span reads YGMQ. Residues H518 and E520 contribute to the active site.

It belongs to the CTP synthase family. Homotetramer.

The enzyme catalyses UTP + L-glutamine + ATP + H2O = CTP + L-glutamate + ADP + phosphate + 2 H(+). It catalyses the reaction L-glutamine + H2O = L-glutamate + NH4(+). It carries out the reaction UTP + NH4(+) + ATP = CTP + ADP + phosphate + 2 H(+). Its pathway is pyrimidine metabolism; CTP biosynthesis via de novo pathway; CTP from UDP: step 2/2. Allosterically activated by GTP, when glutamine is the substrate; GTP has no effect on the reaction when ammonia is the substrate. The allosteric effector GTP functions by stabilizing the protein conformation that binds the tetrahedral intermediate(s) formed during glutamine hydrolysis. Inhibited by the product CTP, via allosteric rather than competitive inhibition. Its function is as follows. Catalyzes the ATP-dependent amination of UTP to CTP with either L-glutamine or ammonia as the source of nitrogen. Regulates intracellular CTP levels through interactions with the four ribonucleotide triphosphates. This Xylella fastidiosa (strain 9a5c) protein is CTP synthase.